The sequence spans 366 residues: Chorismate synthase (366 aa).

Position 48 (Arg-48) interacts with NADP(+). Residues 125 to 127 (RSS), Gly-285, 300 to 304 (KPTPS), and Arg-327 contribute to the FMN site.

Belongs to the chorismate synthase family. It depends on FMNH2 as a cofactor.

It catalyses the reaction 5-O-(1-carboxyvinyl)-3-phosphoshikimate = chorismate + phosphate. The protein operates within metabolic intermediate biosynthesis; chorismate biosynthesis; chorismate from D-erythrose 4-phosphate and phosphoenolpyruvate: step 7/7. Catalyzes the anti-1,4-elimination of the C-3 phosphate and the C-6 proR hydrogen from 5-enolpyruvylshikimate-3-phosphate (EPSP) to yield chorismate, which is the branch point compound that serves as the starting substrate for the three terminal pathways of aromatic amino acid biosynthesis. This reaction introduces a second double bond into the aromatic ring system. In Methanococcoides burtonii (strain DSM 6242 / NBRC 107633 / OCM 468 / ACE-M), this protein is Chorismate synthase.